Here is a 522-residue protein sequence, read N- to C-terminus: E3 ubiquitin-protein ligase DMA2 (522 aa).

Disordered stretches follow at residues 1 to 56 and 69 to 92; these read MYTP…RPAS and QNSQ…PSNS. Residues 14–35 show a composition bias toward low complexity; the sequence is APTSSMTSNSSSASNANTTSSS. Residues 36–49 show a composition bias toward polar residues; that stretch reads GINPRNRASGTPSN. Phosphoserine is present on Ser206. Glycyl lysine isopeptide (Lys-Gly) (interchain with G-Cter in ubiquitin) cross-links involve residues Lys211, Lys256, Lys258, Lys288, Lys310, Lys333, Lys343, Lys346, Lys366, Lys406, Lys412, and Lys423. The FHA domain occupies 295 to 358; sequence LVIGRYTERV…SGTFLNHQRL (64 aa). The RING-type zinc finger occupies 433–477; the sequence is CSICLCKIKPCQAIFISPCAHSWHFRCVRRLVMLSYPQFVCPNCR.

It belongs to the DMA1 family. In terms of processing, UBC4-dependent autoubiquitination occurs at Lys-211, Lys-258, Lys-288, Lys-310, Lys-333, Lys-343, Lys-346, Lys-366, Lys-406, Lys-412 and Lys-423. UBC4-dependent autoubiquitination is responsible for DMA2 turnover. UBC13/MMS2-dependent autoubiquitination occurs at Lys-258, Lys-310, Lys-346 and Lys-366. Lys-211, Lys-256, Lys-288, Lys-310, Lys-343, Lys-258, Lys-366 and Lys-412 are also ubiquitinated in trans by DMA1 E3 ligase in association with UBC4.

Its subcellular location is the cytoplasm. The catalysed reaction is S-ubiquitinyl-[E2 ubiquitin-conjugating enzyme]-L-cysteine + [acceptor protein]-L-lysine = [E2 ubiquitin-conjugating enzyme]-L-cysteine + N(6)-ubiquitinyl-[acceptor protein]-L-lysine.. In terms of biological role, E3 ubiquitin-protein ligase which functions in cell cycle retarding in conjunction with the UBC4 and UBC13/MMS2 complex, 2 E2 ubiquitin conjugating enzymes. Involved in nutritional control of the cell cycle. Required for proper spindle positioning, likely regulating septin ring deposition at the bud neck. This is E3 ubiquitin-protein ligase DMA2 (DMA2) from Saccharomyces cerevisiae (strain ATCC 204508 / S288c) (Baker's yeast).